A 69-amino-acid chain; its full sequence is Peptide Hact-1 (69 aa).

Positions 1–21 are cleaved as a signal peptide; sequence MDRKFHLCLLLVILGTIIVQG. Residues 22 to 57 constitute a propeptide that is removed on maturation; that stretch reads APLENENDADPDKPQKYRYYLKRATTEKKDNDPAKP. Cys-59 and Cys-68 form a disulfide bridge.

In terms of tissue distribution, tentacle (ecto and/or endoderm tissue), and possibly also nematoblasts.

The protein localises to the secreted. It is found in the nematocyst. In terms of biological role, peptide with unknown function. Has a limited effect on human peripheral blood mononuclear cells. Does not show activity against both Gram-positive and Gram-negative bacteria nor is it active on the 26 voltage-gated ion channels tested. This is Peptide Hact-1 from Heliofungia actiniformis (Mushroom coral).